A 286-amino-acid chain; its full sequence is MNIMIALIPALLWGTVPLIITKFGGSTRQQTMGMTLGALTFAVIVFFFTDPVYTLKTVGISFITGCLWTVGQMFQLQAFKIIGVSKAMPISTGMQLVGTTLCGVILFHEWDTTLRIILGFIALALIVGGIFLTSYAEKEEDGTNALKQGLITLFISACGYVGLVVLIQGFKIDGINAILPQAIGMVISALIMTHSGGTEKRFNKRTLLLTIPGVIWAAGNVAMVHANQLVGVATGFSLSQLGVVISTIGGIILLKEKKTQKEMLFVIVGVVLVVLGGILIGVAKGA.

8 helical membrane passes run 4-26 (MIAL…FGGS), 33-55 (GMTL…VYTL), 114-136 (LRII…TSYA), 149-167 (GLIT…VVLI), 177-194 (AILP…IMTH), 207-226 (LLLT…MVHA), 230-252 (VGVA…GGII), and 264-283 (LFVI…IGVA).

This sequence belongs to the GRP transporter (TC 2.A.7.5) family.

Its subcellular location is the cell membrane. In Listeria monocytogenes serovar 1/2a (strain ATCC BAA-679 / EGD-e), this protein is Putative sugar uptake protein lmo0176.